A 460-amino-acid chain; its full sequence is Putative E3 ubiquitin-protein ligase RING1b (460 aa).

A disordered region spans residues Met1 to Ser85. Residues Ser21–Val31 are compositionally biased toward basic and acidic residues. Acidic residues-rich tracts occupy residues Glu32–Asp51 and Glu59–Asp71. An RING-type zinc finger spans residues Cys103 to Arg143. The interval Gln196 to Arg300 is disordered. A compositionally biased stretch (basic residues) spans Arg220–Cys234. Positions Asp240–Asp249 are enriched in acidic residues. The segment covering Gln250–Arg265 has biased composition (basic and acidic residues). Low complexity predominate over residues Ser276–Gly290.

In terms of assembly, heterodimer with RING1A. Interacts with CLF. Component of the PRC1-like complex, at least composed of RING1A, RING1B and LHP1.

The protein localises to the nucleus. It carries out the reaction S-ubiquitinyl-[E2 ubiquitin-conjugating enzyme]-L-cysteine + [acceptor protein]-L-lysine = [E2 ubiquitin-conjugating enzyme]-L-cysteine + N(6)-ubiquitinyl-[acceptor protein]-L-lysine.. It functions in the pathway protein modification; protein ubiquitination. Putative E3 ubiquitin-protein ligase that mediates monoubiquitination of 'Lys-119' of histone H2A (H2AK119ub), thereby playing a central role in histone code and gene regulation. Its function is as follows. As part of the PRC1-like complex, repress class I KNOX gene expression. PcG PRC1 complex maintains the transcriptionally repressive state of many genes, including Hox genes, throughout development. PcG PRC1 complex acts via chromatin remodeling and modification of histones, rendering chromatin heritably changed in its expressibility. This chain is Putative E3 ubiquitin-protein ligase RING1b (RING1B), found in Arabidopsis thaliana (Mouse-ear cress).